The sequence spans 66 residues: Alpha-bisabolene synthase (66 aa).

This sequence belongs to the terpene synthase family. Tpsd subfamily. Mn(2+) serves as cofactor. The cofactor is K(+).

It localises to the cytoplasm. It catalyses the reaction (2E,6E)-farnesyl diphosphate = (E,R)-alpha-bisabolene + diphosphate. It participates in terpene metabolism; oleoresin biosynthesis. Functionally, involved in defensive oleoresin formation in conifers in response to insect attack or other injury. Involved in sesquiterpene (C15) olefins biosynthesis. The protein is Alpha-bisabolene synthase of Pseudotsuga menziesii (Douglas-fir).